A 62-amino-acid chain; its full sequence is Large ribosomal subunit protein uL30 (62 aa).

This sequence belongs to the universal ribosomal protein uL30 family. Part of the 50S ribosomal subunit.

This chain is Large ribosomal subunit protein uL30, found in Prosthecochloris aestuarii (strain DSM 271 / SK 413).